The sequence spans 131 residues: Glycine cleavage system H protein (131 aa).

In terms of domain architecture, Lipoyl-binding spans 24–106 (TVRIGITDYA…YGEGWLVDLE (83 aa)). K65 carries the N6-lipoyllysine modification.

The protein belongs to the GcvH family. In terms of assembly, the glycine cleavage system is composed of four proteins: P, T, L and H. The cofactor is (R)-lipoate.

The glycine cleavage system catalyzes the degradation of glycine. The H protein shuttles the methylamine group of glycine from the P protein to the T protein. The chain is Glycine cleavage system H protein from Mycobacteroides abscessus (strain ATCC 19977 / DSM 44196 / CCUG 20993 / CIP 104536 / JCM 13569 / NCTC 13031 / TMC 1543 / L948) (Mycobacterium abscessus).